Consider the following 126-residue polypeptide: Flagellar assembly factor FliW (126 aa).

The protein belongs to the FliW family. As to quaternary structure, interacts with translational regulator CsrA and flagellin(s).

The protein localises to the cytoplasm. Its function is as follows. Acts as an anti-CsrA protein, binds CsrA and prevents it from repressing translation of its target genes, one of which is flagellin. Binds to flagellin and participates in the assembly of the flagellum. The protein is Flagellar assembly factor FliW of Sulfurimonas denitrificans (strain ATCC 33889 / DSM 1251) (Thiomicrospira denitrificans (strain ATCC 33889 / DSM 1251)).